The following is a 435-amino-acid chain: Histidinol dehydrogenase (435 aa).

3 residues coordinate NAD(+): Tyr131, Gln189, and Asn212. Positions 238, 260, and 263 each coordinate substrate. Residues Gln260 and His263 each contribute to the Zn(2+) site. Residues Glu327 and His328 each act as proton acceptor in the active site. Substrate-binding residues include His328, Asp361, Glu415, and His420. Asp361 serves as a coordination point for Zn(2+). His420 serves as a coordination point for Zn(2+).

The protein belongs to the histidinol dehydrogenase family. Homodimer. Requires Zn(2+) as cofactor.

The catalysed reaction is L-histidinol + 2 NAD(+) + H2O = L-histidine + 2 NADH + 3 H(+). Its pathway is amino-acid biosynthesis; L-histidine biosynthesis; L-histidine from 5-phospho-alpha-D-ribose 1-diphosphate: step 9/9. Catalyzes the sequential NAD-dependent oxidations of L-histidinol to L-histidinaldehyde and then to L-histidine. The protein is Histidinol dehydrogenase (hisD) of Buchnera aphidicola subsp. Acyrthosiphon pisum (strain APS) (Acyrthosiphon pisum symbiotic bacterium).